Reading from the N-terminus, the 504-residue chain is Zinc finger CCCH domain-containing protein 18 (504 aa).

The stretch at 40 to 69 forms a coiled coil; the sequence is SNADLLEVHEELLAAIKDAEEGLLHLKRSR. The interval 77–105 is disordered; sequence IFPNQEPTSEAPEVAVDPPDDVEPEPLEP. A compositionally biased stretch (acidic residues) spans 94–104; it reads PPDDVEPEPLE. The segment at 146 to 173 adopts a C3H1-type zinc-finger fold; the sequence is SENMSMCKFFLQQRCRFGSNCRLSHGIV. The disordered stretch occupies residues 230–276; sequence GSSARLPSDSLSISEYADESDEDGEGSSSDEGSDFSEDGDQEDESVH. Composition is skewed to acidic residues over residues 245–254 and 260–272; these read YADESDEDGE and EGSDFSEDGDQED. The 47-residue stretch at 304 to 350 folds into the G-patch domain; that stretch reads TRGVASKMMAKMGYREGMGLGVSGQGMLDPIPVKVLPPKQSLDHAVA. 3 disordered regions span residues 351-390, 406-432, and 482-504; these read ASEVNDSVGPGKKRSRGGKRKREKKFAEQARAAKAEEEER, AEGSAVKSKKDSSGEANGHAKKEDRRS, and EATHASATNAVARKEKEKKWLKF. Over residues 361 to 374 the composition is skewed to basic residues; it reads GKKRSRGGKRKREK. Composition is skewed to basic and acidic residues over residues 375 to 390, 413 to 432, and 493 to 504; these read KFAEQARAAKAEEEER, SKKDSSGEANGHAKKEDRRS, and ARKEKEKKWLKF. Residues 430–500 adopt a coiled-coil conformation; it reads RRSLLAYDDE…AVARKEKEKK (71 aa).

The protein is Zinc finger CCCH domain-containing protein 18 of Oryza sativa subsp. japonica (Rice).